The primary structure comprises 128 residues: Prokineticin-2 (128 aa).

The N-terminal stretch at 1–26 is a signal peptide; it reads MGDPRCAPLLLLLLLPLLFTPPAGDA. Disulfide bonds link C33/C45, C39/C57, C44/C106, C67/C114, and C108/C124.

This sequence belongs to the AVIT (prokineticin) family. As to expression, expressed in the SCN and among a few other discrete brain areas, including the islands of Calleja, media l preoptic area of the hypothalamus and the shell of the nucleus accumbens. Highly expressed in testis. In the SCN, expression subjected to high amplitude of circadian oscillation.

The protein resides in the secreted. In terms of biological role, may function as an output molecule from the suprachiasmatic nucleus (SCN) that transmits behavioral circadian rhythm. May also function locally within the SCN to synchronize output. Potently contracts gastrointestinal (GI) smooth muscle. The sequence is that of Prokineticin-2 (Prok2) from Mus musculus (Mouse).